Reading from the N-terminus, the 442-residue chain is Septin-8 (442 aa).

Basic and acidic residues predominate over residues 1 to 16 (MAATDLERVSSAEPEP). The interval 1-23 (MAATDLERVSSAEPEPRSLSLGG) is disordered. Ala-2 is modified (N-acetylalanine). Ser-10 is subject to Phosphoserine. Positions 41–307 (QGFSFNILCV…ELYRRCKLEE (267 aa)) constitute a Septin-type G domain. Residues 51 to 58 (GETGIGKS) form a G1 motif region. GTP-binding positions include 51–58 (GETGIGKS), Gly-106, 187–195 (KADTISKSE), Gly-241, and Arg-256. The G3 motif stretch occupies residues 103 to 106 (DAVG). A G4 motif region spans residues 186–189 (AKAD). A coiled-coil region spans residues 322–410 (LQETYEAKRK…RKAAVEALQS (89 aa)). Residues 377 to 391 (HQEEKRKVEEKRREL) are compositionally biased toward basic and acidic residues. Positions 377–442 (HQEEKRKVEE…WSSIYSVTIP (66 aa)) are disordered. Polar residues-rich tracts occupy residues 408–420 (LQSQ…SQQP) and 432–442 (GWSSIYSVTIP).

Belongs to the TRAFAC class TrmE-Era-EngA-EngB-Septin-like GTPase superfamily. Septin GTPase family. Septins polymerize into heterooligomeric protein complexes that form filaments, and can associate with cellular membranes, actin filaments and microtubules. GTPase activity is required for filament formation. Interacts with CDK14, SEPTIN4, SEPTIN5 and SEPTIN7. Interacts with VAMP2; the interaction inhibits interaction of VAMP2 with SYP. Interacts with STX1A.

The protein resides in the cytoplasm. Its subcellular location is the cytoskeleton. It is found in the synapse. The protein localises to the cell projection. It localises to the axon. The protein resides in the cytoplasmic vesicle. Its subcellular location is the secretory vesicle. It is found in the synaptic vesicle membrane. The protein localises to the presynapse. Filament-forming cytoskeletal GTPase. May play a role in platelet secretion. Seems to participate in the process of SNARE complex formation in synaptic vesicles. The sequence is that of Septin-8 from Otolemur garnettii (Small-eared galago).